Reading from the N-terminus, the 1678-residue chain is Nuclear pore complex protein Nup98-Nup96 (1678 aa).

The segment covering 1–11 has biased composition (low complexity); that stretch reads MFGQNKSFGSS. Disordered stretches follow at residues 1–41, 68–100, 301–366, 441–473, and 603–631; these read MFGQ…QPAN, SSIF…FGST, TTGS…GAPA, FGNT…TQAT, and SKEA…RSVH. The segment covering 12 to 22 has biased composition (gly residues); that stretch reads SFGGGSSGSGL. 2 stretches are compositionally biased toward low complexity: residues 23 to 38 and 73 to 83; these read FGQN…LFGQ and SPQQPQNNQSS. Residues 306-329 are compositionally biased toward polar residues; it reads LFGNQQPQTNTGGSLFGNTQNQNQ. A compositionally biased stretch (low complexity) spans 345-366; that stretch reads FGQAQQQPQQQSSGFSFGGAPA. 2 stretches are compositionally biased toward polar residues: residues 456 to 473 and 615 to 628; these read SQPQ…TQAT and RNST…LTNR. In terms of domain architecture, Peptidase S59 spans 777–919; the sequence is KPDYFSLPTI…GSWVFRVDHF (143 aa). The active-site Nucleophile is the S920.

Belongs to the nucleoporin GLFG family. Part of the NPC. In terms of processing, the Nup98 and Nup96 chains are autoproteolytically processed from a single precursor protein.

Its subcellular location is the cytoplasmic granule. The protein resides in the nucleus membrane. It localises to the nucleus. The protein localises to the nuclear pore complex. It is found in the nucleus envelope. Its subcellular location is the chromosome. Functionally, nup98 and Nup96 play a role in the bidirectional transport across the nucleoporin complex (NPC). Required for the nuclear import of hcp-4 during mitotic prophase, this step is essential for centrosome assembly and resolution. Regulates nucleoporin npp-5 localization to the nuclear membrane during interphase and to kinetochores during metaphase. Has a role in P granule integrity; may promote the 'liquid phase' of P granules by increasing the number of interacting RNA-protein complexes. Binds nos-2 mRNA, probably indirectly, and promotes its accumulation in P granules. This chain is Nuclear pore complex protein Nup98-Nup96, found in Caenorhabditis elegans.